The following is a 259-amino-acid chain: Ribosomal RNA small subunit methyltransferase A (259 aa).

6 residues coordinate S-adenosyl-L-methionine: Asn13, Leu15, Gly40, Glu61, Asp85, and Asn103.

It belongs to the class I-like SAM-binding methyltransferase superfamily. rRNA adenine N(6)-methyltransferase family. RsmA subfamily.

The protein resides in the cytoplasm. The enzyme catalyses adenosine(1518)/adenosine(1519) in 16S rRNA + 4 S-adenosyl-L-methionine = N(6)-dimethyladenosine(1518)/N(6)-dimethyladenosine(1519) in 16S rRNA + 4 S-adenosyl-L-homocysteine + 4 H(+). Functionally, specifically dimethylates two adjacent adenosines (A1518 and A1519) in the loop of a conserved hairpin near the 3'-end of 16S rRNA in the 30S particle. May play a critical role in biogenesis of 30S subunits. This chain is Ribosomal RNA small subunit methyltransferase A, found in Neisseria gonorrhoeae (strain NCCP11945).